Consider the following 153-residue polypeptide: Small ribosomal subunit protein uS5 (153 aa).

The S5 DRBM domain maps to F15–V78.

The protein belongs to the universal ribosomal protein uS5 family. As to quaternary structure, part of the 30S ribosomal subunit. Contacts proteins S4 and S8.

Functionally, with S4 and S12 plays an important role in translational accuracy. Its function is as follows. Located at the back of the 30S subunit body where it stabilizes the conformation of the head with respect to the body. The chain is Small ribosomal subunit protein uS5 from Helicobacter pylori (strain P12).